Reading from the N-terminus, the 62-residue chain is MARVCTITGRKARSGNSRSHAMNATKRKWGANLQKVRVRIDGKVQRVYVSARALKSGKIERV.

The segment at 1 to 28 (MARVCTITGRKARSGNSRSHAMNATKRK) is disordered.

The protein belongs to the bacterial ribosomal protein bL28 family.

The sequence is that of Large ribosomal subunit protein bL28 from Bacillus anthracis (strain CDC 684 / NRRL 3495).